The sequence spans 697 residues: Putative flagellar export/assembly protein LfhA (697 aa).

The next 7 membrane-spanning stretches (helical) occupy residues 19–39 (VPLVILCILAMVILPLPPALL), 40–60 (DILFTFNIVLAVMVLLVAVSA), 66–86 (FSLFPTILLITTLMRLTLNVA), 116–136 (GNFVVGFVVFIILMIINFIVV), 204–224 (AIAGMMILAINLIGGVCIGIF), 242–262 (IGDGLVAQIPSLLLSTAAAII), and 280–302 (LLASPSVLYTATGIMFVLAVVPG).

The protein belongs to the FHIPEP (flagella/HR/invasion proteins export pore) family.

The protein resides in the cell inner membrane. Its function is as follows. Part of the flagellar gene cluster Flag-2. However, the Flag-2 flagellar system could be inactive in strain 042 due to a frameshift in lfgC. The protein is Putative flagellar export/assembly protein LfhA of Escherichia coli O44:H18 (strain 042 / EAEC).